A 395-amino-acid chain; its full sequence is Zinc-regulated GTPase metalloprotein activator 1E (395 aa).

Residues 1–22 (MLPAVGSVDEEEDPAEEDCPEL) are disordered. Over residues 8 to 20 (VDEEEDPAEEDCP) the composition is skewed to acidic residues. A psi-PxLVp motif motif is present at residues 17–24 (EDCPELVP). 49–56 (GYLGAGKT) lines the GTP pocket. Zn(2+) is bound by residues Cys-107, Cys-109, and Cys-110. The short motif at 107 to 110 (CLCC) is the CXCC motif element. GTP-binding positions include 110-114 (CSVKD) and 203-206 (NKTD). A CobW C-terminal domain is found at 274 to 377 (IVTITFEVPG…ILKQLFIATV (104 aa)).

This sequence belongs to the SIMIBI class G3E GTPase family. ZNG1 subfamily.

It localises to the nucleus. The enzyme catalyses GTP + H2O = GDP + phosphate + H(+). Zinc chaperone that directly transfers zinc cofactor to target metalloproteins, thereby activating them. Catalyzes zinc insertion into the active site of methionine aminopeptidase METAP1, which function to cleave the initiator methionine from polypeptides during or after protein translation. Mechanistically, the N-terminal psi-PxLVp motif binds to the C6H2-type zinc finger of inactive form of METAP1. After formation of the docked complex, zinc is transferred from the CXCC motif in the GTPase domain of ZNG1E to the zinc binding site in the peptidase domain of METAP1 in a process requiring GTP hydrolysis. GTP/GDP exchange is required for release of active METAP1. This chain is Zinc-regulated GTPase metalloprotein activator 1E, found in Homo sapiens (Human).